We begin with the raw amino-acid sequence, 370 residues long: Biotin synthase (370 aa).

The Radical SAM core domain occupies 50–276 (FSDGTVDACS…IAVYRFLHPE (227 aa)). Positions 68, 72, and 75 each coordinate [4Fe-4S] cluster. The [2Fe-2S] cluster site is built by cysteine 208 and arginine 280. The interval 328–370 (AGLEPNREANTFDPESVKARHRSPAAETASNANRTNATTETDD) is disordered. Residues 352–370 (AAETASNANRTNATTETDD) show a composition bias toward low complexity.

This sequence belongs to the radical SAM superfamily. Biotin synthase family. Homodimer. [4Fe-4S] cluster is required as a cofactor. [2Fe-2S] cluster serves as cofactor.

The enzyme catalyses (4R,5S)-dethiobiotin + (sulfur carrier)-SH + 2 reduced [2Fe-2S]-[ferredoxin] + 2 S-adenosyl-L-methionine = (sulfur carrier)-H + biotin + 2 5'-deoxyadenosine + 2 L-methionine + 2 oxidized [2Fe-2S]-[ferredoxin]. Its pathway is cofactor biosynthesis; biotin biosynthesis; biotin from 7,8-diaminononanoate: step 2/2. Functionally, catalyzes the conversion of dethiobiotin (DTB) to biotin by the insertion of a sulfur atom into dethiobiotin via a radical-based mechanism. The sequence is that of Biotin synthase from Natronomonas pharaonis (strain ATCC 35678 / DSM 2160 / CIP 103997 / JCM 8858 / NBRC 14720 / NCIMB 2260 / Gabara) (Halobacterium pharaonis).